Reading from the N-terminus, the 485-residue chain is Cysteine--tRNA ligase (485 aa).

Cys-27 lines the Zn(2+) pocket. A 'HIGH' region motif is present at residues 29 to 39 (ITAYDLCHIGH). Zn(2+) is bound by residues Cys-208, His-233, and Glu-237. The 'KMSKS' region motif lies at 265–269 (KMSKS). Lys-268 contacts ATP.

Belongs to the class-I aminoacyl-tRNA synthetase family. As to quaternary structure, monomer. The cofactor is Zn(2+).

It localises to the cytoplasm. The catalysed reaction is tRNA(Cys) + L-cysteine + ATP = L-cysteinyl-tRNA(Cys) + AMP + diphosphate. The chain is Cysteine--tRNA ligase from Nitratidesulfovibrio vulgaris (strain DSM 19637 / Miyazaki F) (Desulfovibrio vulgaris).